Reading from the N-terminus, the 425-residue chain is UBX domain-containing protein 4 (425 aa).

The segment at 224-257 (TPIPSLPSTPSSYQNLPSQSLTGESLPTVSNQEK) is disordered. Positions 236–254 (YQNLPSQSLTGESLPTVSN) are enriched in polar residues. Ser-338 is subject to Phosphoserine. The UBX domain maps to 341 to 390 (PLPSSAIVKFDFGNGKSIVHEFSKDDNIETLRAFVASHLSPEESTSFQLT).

Its subcellular location is the cytoplasm. The protein localises to the nucleus. In terms of biological role, involved in CDC48-dependent protein degradation through the ubiquitin/proteasome pathway. The chain is UBX domain-containing protein 4 (ubx4) from Schizosaccharomyces pombe (strain 972 / ATCC 24843) (Fission yeast).